A 158-amino-acid chain; its full sequence is 6,7-dimethyl-8-ribityllumazine synthase (158 aa).

Residues F22, 56–58 (ALE), and 80–82 (VVI) each bind 5-amino-6-(D-ribitylamino)uracil. Residue 85–86 (ET) participates in (2S)-2-hydroxy-3-oxobutyl phosphate binding. The active-site Proton donor is H88. Position 113 (N113) interacts with 5-amino-6-(D-ribitylamino)uracil. R127 contributes to the (2S)-2-hydroxy-3-oxobutyl phosphate binding site.

Belongs to the DMRL synthase family.

The catalysed reaction is (2S)-2-hydroxy-3-oxobutyl phosphate + 5-amino-6-(D-ribitylamino)uracil = 6,7-dimethyl-8-(1-D-ribityl)lumazine + phosphate + 2 H2O + H(+). It participates in cofactor biosynthesis; riboflavin biosynthesis; riboflavin from 2-hydroxy-3-oxobutyl phosphate and 5-amino-6-(D-ribitylamino)uracil: step 1/2. Functionally, catalyzes the formation of 6,7-dimethyl-8-ribityllumazine by condensation of 5-amino-6-(D-ribitylamino)uracil with 3,4-dihydroxy-2-butanone 4-phosphate. This is the penultimate step in the biosynthesis of riboflavin. The sequence is that of 6,7-dimethyl-8-ribityllumazine synthase from Neisseria meningitidis serogroup C / serotype 2a (strain ATCC 700532 / DSM 15464 / FAM18).